Here is a 333-residue protein sequence, read N- to C-terminus: Glutamyl-tRNA reductase (333 aa).

Substrate contacts are provided by residues 60–63 (TCHR), Ser110, 115–117 (ETE), and Gln121. Cys61 acts as the Nucleophile in catalysis. An NADP(+)-binding site is contributed by 189-194 (GYSEIN).

This sequence belongs to the glutamyl-tRNA reductase family. As to quaternary structure, homodimer.

The catalysed reaction is (S)-4-amino-5-oxopentanoate + tRNA(Glu) + NADP(+) = L-glutamyl-tRNA(Glu) + NADPH + H(+). It participates in porphyrin-containing compound metabolism; protoporphyrin-IX biosynthesis; 5-aminolevulinate from L-glutamyl-tRNA(Glu): step 1/2. In terms of biological role, catalyzes the NADPH-dependent reduction of glutamyl-tRNA(Glu) to glutamate 1-semialdehyde (GSA). This is Glutamyl-tRNA reductase from Chlamydia muridarum (strain MoPn / Nigg).